We begin with the raw amino-acid sequence, 249 residues long: tRNA (guanine-N(1)-)-methyltransferase (249 aa).

S-adenosyl-L-methionine contacts are provided by residues G113 and 133–138 (IGDYVL).

The protein belongs to the RNA methyltransferase TrmD family. In terms of assembly, homodimer.

It localises to the cytoplasm. It carries out the reaction guanosine(37) in tRNA + S-adenosyl-L-methionine = N(1)-methylguanosine(37) in tRNA + S-adenosyl-L-homocysteine + H(+). Functionally, specifically methylates guanosine-37 in various tRNAs. The protein is tRNA (guanine-N(1)-)-methyltransferase of Aeromonas hydrophila subsp. hydrophila (strain ATCC 7966 / DSM 30187 / BCRC 13018 / CCUG 14551 / JCM 1027 / KCTC 2358 / NCIMB 9240 / NCTC 8049).